The sequence spans 196 residues: UMP-CMP kinase (196 aa).

13–18 (GAGKGT) is an ATP binding site. Position 33 is a phosphoserine (Ser33). Positions 33–63 (SAGELLRDERKNPDSQYGELIEKYIKEGKIV) are NMP. Arg39 is an a ribonucleoside 5'-phosphate binding site. N6-acetyllysine occurs at positions 43 and 55. A ribonucleoside 5'-phosphate is bound at residue 61–63 (KIV). Lys73 participates in a covalent cross-link: Glycyl lysine isopeptide (Lys-Gly) (interchain with G-Cter in SUMO2). 93 to 96 (GFPR) lines the a ribonucleoside 5'-phosphate pocket. Residue Asn100 coordinates CMP. Residue Lys106 is modified to N6-succinyllysine. The segment at 133–143 (ERGKSSGRSDD) is LID. Arg134 lines the ATP pocket. A ribonucleoside 5'-phosphate contacts are provided by Arg140 and Arg151. Residue Lys179 coordinates ATP. Phosphoserine is present on Ser180.

This sequence belongs to the adenylate kinase family. UMP-CMP kinase subfamily. Monomer. Mg(2+) serves as cofactor. In terms of tissue distribution, ubiquitously expressed.

It is found in the nucleus. Its subcellular location is the cytoplasm. The enzyme catalyses CMP + ATP = CDP + ADP. It catalyses the reaction dCMP + ATP = dCDP + ADP. It carries out the reaction UMP + ATP = UDP + ADP. The catalysed reaction is a 2'-deoxyribonucleoside 5'-diphosphate + ATP = a 2'-deoxyribonucleoside 5'-triphosphate + ADP. The enzyme catalyses a ribonucleoside 5'-diphosphate + ATP = a ribonucleoside 5'-triphosphate + ADP. Its function is as follows. Catalyzes the phosphorylation of pyrimidine nucleoside monophosphates at the expense of ATP. Plays an important role in de novo pyrimidine nucleotide biosynthesis. Has preference for UMP and CMP as phosphate acceptors. Also displays broad nucleoside diphosphate kinase activity. This Homo sapiens (Human) protein is UMP-CMP kinase.